The chain runs to 118 residues: Beta-2-microglobulin (118 aa).

The N-terminal stretch at 1-21 is a signal peptide; that stretch reads MESRWGIVVIGLLCCVSWVEA. In terms of domain architecture, Ig-like C1-type spans 26–113; it reads PKIQVYTRSP…THNSVTKSVK (88 aa). Cysteine 46 and cysteine 101 are disulfide-bonded.

Belongs to the beta-2-microglobulin family. Heterodimer of an alpha chain and a beta chain. Beta-2-microglobulin is the beta-chain of major histocompatibility complex class I molecules.

The protein localises to the secreted. Its function is as follows. Component of the class I major histocompatibility complex (MHC). Involved in the presentation of peptide antigens to the immune system. The protein is Beta-2-microglobulin (B2M) of Tachyglossus aculeatus aculeatus (Southeast Australian short-beaked echidna).